A 569-amino-acid chain; its full sequence is Glutamate--tRNA ligase (569 aa).

The 'HIGH' region signature appears at 110–120; sequence PNPNGPPTLGS.

It belongs to the class-I aminoacyl-tRNA synthetase family. Glutamate--tRNA ligase type 2 subfamily.

It is found in the cytoplasm. It carries out the reaction tRNA(Glu) + L-glutamate + ATP = L-glutamyl-tRNA(Glu) + AMP + diphosphate. In terms of biological role, catalyzes the attachment of glutamate to tRNA(Glu) in a two-step reaction: glutamate is first activated by ATP to form Glu-AMP and then transferred to the acceptor end of tRNA(Glu). This Methanococcoides burtonii (strain DSM 6242 / NBRC 107633 / OCM 468 / ACE-M) protein is Glutamate--tRNA ligase.